The primary structure comprises 347 residues: NADH-ubiquinone oxidoreductase chain 2 (347 aa).

10 consecutive transmembrane segments (helical) span residues 3–23 (PPIL…VMLS), 25–45 (HWLL…PILM), 66–86 (ASML…QWVI), 111–131 (FHFW…MILL), 149–169 (INTN…GWGG), 178–198 (IMAY…TYNP), 201–221 (MVLN…LFML), 237–257 (FPLI…LPPL), 274–294 (NMII…YFYL), and 325–345 (LLPP…MLSV).

It belongs to the complex I subunit 2 family. In terms of assembly, core subunit of respiratory chain NADH dehydrogenase (Complex I) which is composed of 45 different subunits. Interacts with TMEM242.

It is found in the mitochondrion inner membrane. It carries out the reaction a ubiquinone + NADH + 5 H(+)(in) = a ubiquinol + NAD(+) + 4 H(+)(out). Its function is as follows. Core subunit of the mitochondrial membrane respiratory chain NADH dehydrogenase (Complex I) which catalyzes electron transfer from NADH through the respiratory chain, using ubiquinone as an electron acceptor. Essential for the catalytic activity and assembly of complex I. In Canis lupus familiaris (Dog), this protein is NADH-ubiquinone oxidoreductase chain 2.